We begin with the raw amino-acid sequence, 312 residues long: DNA-directed RNA polymerase subunit alpha (312 aa).

The segment at 1–229 is alpha N-terminal domain (alpha-NTD); that stretch reads MLQYQIDRID…ELFQPLATVS (229 aa). Residues 239–312 are alpha C-terminal domain (alpha-CTD); it reads EPAAEAQIPL…ISIPQSRTSA (74 aa).

This sequence belongs to the RNA polymerase alpha chain family. In terms of assembly, in cyanobacteria the RNAP catalytic core is composed of 2 alpha, 1 beta, 1 beta', 1 gamma and 1 omega subunit. When a sigma factor is associated with the core the holoenzyme is formed, which can initiate transcription.

The enzyme catalyses RNA(n) + a ribonucleoside 5'-triphosphate = RNA(n+1) + diphosphate. DNA-dependent RNA polymerase catalyzes the transcription of DNA into RNA using the four ribonucleoside triphosphates as substrates. The protein is DNA-directed RNA polymerase subunit alpha of Prochlorococcus marinus (strain NATL1A).